A 293-amino-acid polypeptide reads, in one-letter code: Nucleotide-binding protein HRM2_27900 (293 aa).

An ATP-binding site is contributed by 11–18; that stretch reads GLSGSGKS. Position 62-65 (62-65) interacts with GTP; the sequence is DIRA.

It belongs to the RapZ-like family.

Functionally, displays ATPase and GTPase activities. The protein is Nucleotide-binding protein HRM2_27900 of Desulforapulum autotrophicum (strain ATCC 43914 / DSM 3382 / VKM B-1955 / HRM2) (Desulfobacterium autotrophicum).